The primary structure comprises 261 residues: Phosphatidylglycerol--prolipoprotein diacylglyceryl transferase (261 aa).

A run of 4 helical transmembrane segments spans residues 12-32 (ISIR…VYLA), 41-61 (IIPD…IVGA), 87-107 (GIAG…LYFF), and 112-132 (LIHP…AQSI). Arg134 is an a 1,2-diacyl-sn-glycero-3-phospho-(1'-sn-glycerol) binding site. A run of 3 helical transmembrane segments spans residues 170-190 (QPTF…IIVL), 200-220 (GEIA…IEGM), and 229-249 (GLRV…GIII).

This sequence belongs to the Lgt family.

It localises to the cell membrane. The enzyme catalyses L-cysteinyl-[prolipoprotein] + a 1,2-diacyl-sn-glycero-3-phospho-(1'-sn-glycerol) = an S-1,2-diacyl-sn-glyceryl-L-cysteinyl-[prolipoprotein] + sn-glycerol 1-phosphate + H(+). The protein operates within protein modification; lipoprotein biosynthesis (diacylglyceryl transfer). In terms of biological role, catalyzes the transfer of the diacylglyceryl group from phosphatidylglycerol to the sulfhydryl group of the N-terminal cysteine of a prolipoprotein, the first step in the formation of mature lipoproteins. The protein is Phosphatidylglycerol--prolipoprotein diacylglyceryl transferase of Streptococcus sanguinis (strain SK36).